A 98-amino-acid chain; its full sequence is Integration host factor subunit alpha (98 aa).

The span at 53–69 shows a compositional bias: basic and acidic residues; sequence DLREKNERPGRNPKTGE. Residues 53–72 form a disordered region; it reads DLREKNERPGRNPKTGEDIP.

This sequence belongs to the bacterial histone-like protein family. Heterodimer of an alpha and a beta chain.

This protein is one of the two subunits of integration host factor, a specific DNA-binding protein that functions in genetic recombination as well as in transcriptional and translational control. This Vibrio atlanticus (strain LGP32) (Vibrio splendidus (strain Mel32)) protein is Integration host factor subunit alpha.